Consider the following 256-residue polypeptide: Spore coat polysaccharide biosynthesis protein SpsA (256 aa).

C155 and C243 are joined by a disulfide. The active site involves D191.

It belongs to the glycosyltransferase 2 family. As to quaternary structure, monomer in solution.

It functions in the pathway spore coat biogenesis; spore coat polysaccharide biosynthesis. Glycosyltransferase implicated in the synthesis of the spore coat. This chain is Spore coat polysaccharide biosynthesis protein SpsA (spsA), found in Bacillus subtilis (strain 168).